Here is a 607-residue protein sequence, read N- to C-terminus: Albumin B (607 aa).

Positions M1 to S18 are cleaved as a signal peptide. A propeptide spanning residues R19–R24 is cleaved from the precursor. 3 consecutive Albumin domains span residues F22–M209, K210–N402, and E403–E600. Residue H30 participates in Cu cation binding. 17 disulfide bridges follow: C80/C88, C101/C117, C116/C127, C147/C192, C191/C200, C223/C269, C268/C276, C288/C302, C301/C312, C339/C384, C383/C392, C415/C461, C460/C471, C484/C500, C499/C510, C537/C582, and C581/C590.

This sequence belongs to the ALB/AFP/VDB family. Plasma.

The protein localises to the secreted. Serum albumin, the main protein of plasma, has a good binding capacity for water, Ca(2+), Na(+), K(+), fatty acids, hormones, bilirubin and drugs. Its main function is the regulation of the colloidal osmotic pressure of blood. The protein is Albumin B (alb-b) of Xenopus laevis (African clawed frog).